The sequence spans 874 residues: Alanine--tRNA ligase (874 aa).

Zn(2+)-binding residues include histidine 562, histidine 566, cysteine 663, and histidine 667.

This sequence belongs to the class-II aminoacyl-tRNA synthetase family. Zn(2+) is required as a cofactor.

It is found in the cytoplasm. It carries out the reaction tRNA(Ala) + L-alanine + ATP = L-alanyl-tRNA(Ala) + AMP + diphosphate. Functionally, catalyzes the attachment of alanine to tRNA(Ala) in a two-step reaction: alanine is first activated by ATP to form Ala-AMP and then transferred to the acceptor end of tRNA(Ala). Also edits incorrectly charged Ser-tRNA(Ala) and Gly-tRNA(Ala) via its editing domain. This chain is Alanine--tRNA ligase, found in Bordetella pertussis (strain Tohama I / ATCC BAA-589 / NCTC 13251).